The sequence spans 335 residues: Fructose-1,6-bisphosphatase class 1 (335 aa).

Glutamate 92, aspartate 114, leucine 116, and aspartate 117 together coordinate Mg(2+). Substrate is bound by residues aspartate 117–serine 120 and asparagine 209. Glutamate 281 contacts Mg(2+).

Belongs to the FBPase class 1 family. Homotetramer. Mg(2+) serves as cofactor.

It localises to the cytoplasm. The catalysed reaction is beta-D-fructose 1,6-bisphosphate + H2O = beta-D-fructose 6-phosphate + phosphate. The protein operates within carbohydrate biosynthesis; gluconeogenesis. This is Fructose-1,6-bisphosphatase class 1 from Nitrosococcus oceani (strain ATCC 19707 / BCRC 17464 / JCM 30415 / NCIMB 11848 / C-107).